The primary structure comprises 176 residues: Sperm-egg fusion protein TMEM95 (176 aa).

The N-terminal stretch at methionine 1–alanine 16 is a signal peptide. Cystine bridges form between cysteine 17-cysteine 118, cysteine 20-cysteine 121, cysteine 105-cysteine 128, and cysteine 109-cysteine 134. The Extracellular portion of the chain corresponds to cysteine 17–lysine 145. The helical transmembrane segment at isoleucine 146–glutamate 166 threads the bilayer. At serine 167–leucine 176 the chain is on the cytoplasmic side.

It belongs to the TMEM95 family. Does not interact with sperm-egg fusion proteins IZUMO1 or IZUMO1R/JUNO. N-glycosylated. As to expression, spermatozoa (at protein level).

The protein localises to the cytoplasmic vesicle. It is found in the secretory vesicle. The protein resides in the acrosome membrane. In terms of biological role, sperm protein required for fusion of sperm with the egg membrane during fertilization. The sequence is that of Sperm-egg fusion protein TMEM95 from Homo sapiens (Human).